The sequence spans 498 residues: ATP synthase subunit beta, chloroplastic (498 aa).

172–179 (GGAGVGKT) lines the ATP pocket.

This sequence belongs to the ATPase alpha/beta chains family. F-type ATPases have 2 components, CF(1) - the catalytic core - and CF(0) - the membrane proton channel. CF(1) has five subunits: alpha(3), beta(3), gamma(1), delta(1), epsilon(1). CF(0) has four main subunits: a(1), b(1), b'(1) and c(9-12).

Its subcellular location is the plastid. It localises to the chloroplast thylakoid membrane. The catalysed reaction is ATP + H2O + 4 H(+)(in) = ADP + phosphate + 5 H(+)(out). Functionally, produces ATP from ADP in the presence of a proton gradient across the membrane. The catalytic sites are hosted primarily by the beta subunits. In Zea mays (Maize), this protein is ATP synthase subunit beta, chloroplastic.